A 391-amino-acid chain; its full sequence is Zinc finger protein DPF3 (391 aa).

A compositionally biased stretch (acidic residues) spans 152 to 165 (ENGDGFHDDEDFEV). 2 disordered regions span residues 152-200 (ENGD…PYVC) and 236-266 (LAEE…QKAP). The segment covering 169–183 (KRKHRNKGRGRGSGR) has biased composition (basic residues). Residues 198–235 (YVCDNRYKQKHNSKTADSVCGKRYKNRPGLSYHYAHTH) form a C2H2-type zinc finger. PHD-type zinc fingers lie at residues 273 to 333 (NDYC…CKSC) and 330 to 380 (CKSC…CQNL).

Component of the BAF complex. Interacts with acetylated histones H3 and H4. Component of neuron-specific chromatin remodeling complex (nBAF complex), a subfamily of ATP-dependent SWI/SNF chromatin remodeling complexes. As to expression, expressed in the heart and somites.

The protein localises to the nucleus. Muscle-specific component of the BAF complex, a multiprotein complex involved in transcriptional activation and repression of select genes by chromatin remodeling (alteration of DNA-nucleosome topology). Specifically binds acetylated lysines on histone 3 and 4. In the complex, it acts as a tissue-specific anchor between histone acetylations and methylations and chromatin remodeling. Belongs to the neuron-specific chromatin remodeling complex (nBAF complex) and may play a role in neural development. Plays an essential role in heart and skeletal muscle development. The protein is Zinc finger protein DPF3 (dpf3) of Danio rerio (Zebrafish).